The sequence spans 96 residues: Seed trypsin/chymotrypsin inhibitor IVA (96 aa).

Residues 1–10 form the signal peptide; it reads LSFAANVVNA. The propeptide occupies 11-24; the sequence is RFDSTSFITQVLSN. 7 cysteine pairs are disulfide-bonded: cysteine 32–cysteine 85, cysteine 33–cysteine 48, cysteine 36–cysteine 81, cysteine 38–cysteine 46, cysteine 55–cysteine 62, cysteine 59–cysteine 74, and cysteine 64–cysteine 72. Residues 88–96 constitute a propeptide, removed in PSTI I; sequence SEVEEVIKN.

The protein belongs to the Bowman-Birk serine protease inhibitor family. Seed.

Inhibitor of trypsin and of chymotrypsin. May function as a natural phytochemical defense against predators. This is Seed trypsin/chymotrypsin inhibitor IVA (TI1236) from Pisum sativum (Garden pea).